Reading from the N-terminus, the 237-residue chain is Phosphoribosylaminoimidazole-succinocarboxamide synthase (237 aa).

The protein belongs to the SAICAR synthetase family.

It catalyses the reaction 5-amino-1-(5-phospho-D-ribosyl)imidazole-4-carboxylate + L-aspartate + ATP = (2S)-2-[5-amino-1-(5-phospho-beta-D-ribosyl)imidazole-4-carboxamido]succinate + ADP + phosphate + 2 H(+). It functions in the pathway purine metabolism; IMP biosynthesis via de novo pathway; 5-amino-1-(5-phospho-D-ribosyl)imidazole-4-carboxamide from 5-amino-1-(5-phospho-D-ribosyl)imidazole-4-carboxylate: step 1/2. This Methanosarcina acetivorans (strain ATCC 35395 / DSM 2834 / JCM 12185 / C2A) protein is Phosphoribosylaminoimidazole-succinocarboxamide synthase.